Here is a 66-residue protein sequence, read N- to C-terminus: UPF0337 protein SAG0619 (66 aa).

The disordered stretch occupies residues 1–22 (MSQEKLKSKLDQAKGGAKEGFG).

The protein belongs to the UPF0337 (CsbD) family.

The sequence is that of UPF0337 protein SAG0619 from Streptococcus agalactiae serotype V (strain ATCC BAA-611 / 2603 V/R).